We begin with the raw amino-acid sequence, 150 residues long: Urease accessory protein UreE (150 aa).

Belongs to the UreE family.

The protein resides in the cytoplasm. Functionally, involved in urease metallocenter assembly. Binds nickel. Probably functions as a nickel donor during metallocenter assembly. The chain is Urease accessory protein UreE from Staphylococcus epidermidis (strain ATCC 35984 / DSM 28319 / BCRC 17069 / CCUG 31568 / BM 3577 / RP62A).